Consider the following 344-residue polypeptide: Dihydroorotate dehydrogenase (quinone) (344 aa).

FMN-binding positions include 65–69 and Thr89; that span reads AGLDK. Substrate is bound at residue Lys69. 114 to 118 provides a ligand contact to substrate; sequence NRMGF. FMN is bound by residues Asn145 and Asn178. Asn178 serves as a coordination point for substrate. Ser181 (nucleophile) is an active-site residue. Asn183 is a substrate binding site. Positions 223 and 251 each coordinate FMN. Substrate is bound at residue 252–253; sequence NT. Residues Gly274, Gly303, and 324 to 325 each bind FMN; that span reads YS.

It belongs to the dihydroorotate dehydrogenase family. Type 2 subfamily. In terms of assembly, monomer. Requires FMN as cofactor.

It localises to the cell membrane. The enzyme catalyses (S)-dihydroorotate + a quinone = orotate + a quinol. It participates in pyrimidine metabolism; UMP biosynthesis via de novo pathway; orotate from (S)-dihydroorotate (quinone route): step 1/1. Functionally, catalyzes the conversion of dihydroorotate to orotate with quinone as electron acceptor. The polypeptide is Dihydroorotate dehydrogenase (quinone) (Cupriavidus necator (strain ATCC 17699 / DSM 428 / KCTC 22496 / NCIMB 10442 / H16 / Stanier 337) (Ralstonia eutropha)).